The primary structure comprises 254 residues: 3-deoxy-manno-octulosonate cytidylyltransferase (254 aa).

This sequence belongs to the KdsB family.

The protein resides in the cytoplasm. The catalysed reaction is 3-deoxy-alpha-D-manno-oct-2-ulosonate + CTP = CMP-3-deoxy-beta-D-manno-octulosonate + diphosphate. It functions in the pathway nucleotide-sugar biosynthesis; CMP-3-deoxy-D-manno-octulosonate biosynthesis; CMP-3-deoxy-D-manno-octulosonate from 3-deoxy-D-manno-octulosonate and CTP: step 1/1. Its pathway is bacterial outer membrane biogenesis; lipopolysaccharide biosynthesis. Functionally, activates KDO (a required 8-carbon sugar) for incorporation into bacterial lipopolysaccharide in Gram-negative bacteria. This Pseudomonas syringae pv. syringae (strain B728a) protein is 3-deoxy-manno-octulosonate cytidylyltransferase.